Reading from the N-terminus, the 138-residue chain is U1 small nuclear ribonucleoprotein C (138 aa).

The segment at Tyr4–Phe36 adopts a Matrin-type zinc-finger fold. The tract at residues Gln58–Ser138 is disordered. Residues Pro67–Gly109 are compositionally biased toward pro residues. The span at Met113–Ser138 shows a compositional bias: low complexity.

It belongs to the U1 small nuclear ribonucleoprotein C family. As to quaternary structure, U1 snRNP is composed of the 7 core Sm proteins B/B', D1, D2, D3, E, F and G that assemble in a heptameric protein ring on the Sm site of the small nuclear RNA to form the core snRNP, and at least 3 U1 snRNP-specific proteins U1-70K, U1-A and U1-C. U1-C interacts with U1 snRNA and the 5' splice-site region of the pre-mRNA.

Its subcellular location is the nucleus. Functionally, component of the spliceosomal U1 snRNP, which is essential for recognition of the pre-mRNA 5' splice-site and the subsequent assembly of the spliceosome. U1-C is directly involved in initial 5' splice-site recognition for both constitutive and regulated alternative splicing. The interaction with the 5' splice-site seems to precede base-pairing between the pre-mRNA and the U1 snRNA. Stimulates commitment or early (E) complex formation by stabilizing the base pairing of the 5' end of the U1 snRNA and the 5' splice-site region. The sequence is that of U1 small nuclear ribonucleoprotein C from Nematostella vectensis (Starlet sea anemone).